A 183-amino-acid chain; its full sequence is ARS-binding factor 2, mitochondrial (183 aa).

A mitochondrion-targeting transit peptide spans 1–26 (MNSYSLLTRSFHESSKPLFNLASTLL). 2 consecutive DNA-binding regions (HMG box) follow at residues 43-111 (PKRP…KEFD) and 116-183 (PKKP…YPLN).

The protein resides in the mitochondrion. The protein localises to the nucleus. Functionally, specific binding to the autonomously replicating sequence 1 (ARS1). Interaction with regulatory regions: probably involved in compacting the mitochondrial genome. It might play a positive role in gene expression and replication. The sequence is that of ARS-binding factor 2, mitochondrial (ABF2) from Saccharomyces cerevisiae (strain ATCC 204508 / S288c) (Baker's yeast).